A 448-amino-acid chain; its full sequence is MDWKRSLKEKLRRDGYVRKSEQEMKEEEMSLFTNYYTEWKGGGKVSSAQNIPRFYYRLPAEDEVLQQKLREESRAVFLQRKSRELLDNEELQNLWFLLDKHQSPPLIGEEAMINYTNFQTVGEKAGEKCKTFFTSKVFSKLIPNDPYGRISIMQFFNYVMRKVWLHQTRIGLSLYDVAGQGYLRESDLENYILELIPTLPQLDGLEKSFYSFYVCTAVRKFFFFLDPLRTGKIKIQDILACSFLDDLLELRDEDLSKESQESNWFSAPSALRVYGQYLNLDKDHNGMLSKEELSRYGTGTLTCVFLDRVFQECLTYDGEMDYKTYLDFVLALENRKEPAALQYIFKLLDIENKGSLNVFSLNFFFRAIQEQMKIHGQEAVSFQDVKDEIFDMVKPKDPLRITLQDLIQSSQGDTVCSILIDLNGFWTYENREVLVANDGESPPDIDDT.

EF-hand domains lie at 268–303 (PSAL…TLTC) and 336–371 (KEPA…IQEQ). Ca(2+) is bound by residues Asp281, Asp283, Asn285, Met287, and Glu292.

The protein resides in the nucleus. It is found in the cytoplasm. In terms of biological role, possible role in the regulation of cell death. In Xenopus tropicalis (Western clawed frog), this protein is Serine/threonine-protein phosphatase 2A regulatory subunit B'' subunit gamma (ppp2r3c).